Reading from the N-terminus, the 213-residue chain is Kynurenine formamidase (213 aa).

W18 serves as a coordination point for substrate. Zn(2+) is bound by residues H48, H52, and D54. H58 acts as the Proton donor/acceptor in catalysis. Residues H160 and E172 each coordinate Zn(2+).

This sequence belongs to the Cyclase 1 superfamily. KynB family. Homodimer. Requires Zn(2+) as cofactor.

It catalyses the reaction N-formyl-L-kynurenine + H2O = L-kynurenine + formate + H(+). Its pathway is amino-acid degradation; L-tryptophan degradation via kynurenine pathway; L-kynurenine from L-tryptophan: step 2/2. In terms of biological role, catalyzes the hydrolysis of N-formyl-L-kynurenine to L-kynurenine, the second step in the kynurenine pathway of tryptophan degradation. The chain is Kynurenine formamidase from Burkholderia pseudomallei (strain 1106a).